A 329-amino-acid polypeptide reads, in one-letter code: Eukaryotic translation initiation factor 2 subunit 1 (329 aa).

Residues aspartate 24–arginine 95 enclose the S1 motif domain. Serine 59 carries the post-translational modification Phosphoserine; by eIK1, eIK2 and PK4. Residues leucine 291–aspartate 329 are disordered. The segment covering serine 298–aspartate 329 has biased composition (acidic residues).

It belongs to the eIF-2-alpha family. Post-translationally, phosphorylated at Ser-59 by eIK1 in response to amino acid starvation. Phosphorylates at Ser-59 in schizonts and gametocytes but not in rings and young trophozoites. Phosphorylates at Ser-59 by eIK2 in salivary gland sporozoites but not in midgut and hemocoel sporozoites. Dephosphorylated at Ser-59 by UIS2. Phosphorylation of eIF2alpha subunit of the pre-initiation complex eIF2 inhibits recycling of inactive eIF2-GDP to active eIF2-GTP by limiting the activity of the guanine nucleotide exchange factor eIF2B and thus, inhibits protein translation.

The protein localises to the cytoplasm. It localises to the stress granule. Functions in the early steps of protein synthesis by forming a ternary complex with GTP and initiator tRNA. May regulate protein translation in response to amino acid starvation. May regulate protein at various stages of parasite development. The protein is Eukaryotic translation initiation factor 2 subunit 1 of Plasmodium falciparum (isolate 3D7).